The sequence spans 411 residues: Methylthioribose-1-phosphate isomerase (411 aa).

Asp-284 acts as the Proton donor in catalysis.

The protein belongs to the eIF-2B alpha/beta/delta subunits family. MtnA subfamily.

The protein localises to the cytoplasm. Its subcellular location is the nucleus. The catalysed reaction is 5-(methylsulfanyl)-alpha-D-ribose 1-phosphate = 5-(methylsulfanyl)-D-ribulose 1-phosphate. The protein operates within amino-acid biosynthesis; L-methionine biosynthesis via salvage pathway; L-methionine from S-methyl-5-thio-alpha-D-ribose 1-phosphate: step 1/6. Catalyzes the interconversion of methylthioribose-1-phosphate (MTR-1-P) into methylthioribulose-1-phosphate (MTRu-1-P). The sequence is that of Methylthioribose-1-phosphate isomerase from Komagataella phaffii (strain GS115 / ATCC 20864) (Yeast).